The following is a 163-amino-acid chain: CASP-like protein 1C3 (163 aa).

Residues 1–6 lie on the Cytoplasmic side of the membrane; it reads MAKIKK. Residues 7–27 form a helical membrane-spanning segment; that stretch reads IFTNFLRLLALAATVVAIVFM. Residues 28 to 52 lie on the Extracellular side of the membrane; that stretch reads VTSHDSAQVLNLTFTVKYSNTPVFK. The N-linked (GlcNAc...) asparagine glycan is linked to Asn-38. Residues 53–73 form a helical membrane-spanning segment; it reads YFVIAEAIAGGYIVISILLSF. The Cytoplasmic portion of the chain corresponds to 74-79; it reads KSLFWR. The chain crosses the membrane as a helical span at residues 80-100; that stretch reads LLVILDMVTAVLLTSSISAAL. The Extracellular segment spans residues 101 to 128; it reads AIAQVGKKGNTHAGWLPVCEQVPDFCDQ. The helical transmembrane segment at 129–149 threads the bilayer; it reads VTIALIAGFAAAIIYFVLLLC. Residues 150 to 163 are Cytoplasmic-facing; the sequence is SLYVVLSPIFVVTP.

The protein belongs to the Casparian strip membrane proteins (CASP) family. Homodimer and heterodimers.

The protein localises to the cell membrane. The chain is CASP-like protein 1C3 from Populus trichocarpa (Western balsam poplar).